A 597-amino-acid chain; its full sequence is Translation initiation factor IF-2 (597 aa).

2 stretches are compositionally biased toward low complexity: residues 57-73 and 81-95; these read GGDA…AATA and TPAA…PASD. Residues 57–96 are disordered; the sequence is GGDAAPAAASAPAAATAEPEEADETPAAAAQADAEPASDL. Residues 98–271 enclose the tr-type G domain; that stretch reads HRAPVVTIMG…ELEDLRADPK (174 aa). Residues 107 to 114 form a G1 region; it reads GHVDHGKT. Position 107–114 (107–114) interacts with GTP; the sequence is GHVDHGKT. The interval 132–136 is G2; it reads GITQH. The G3 stretch occupies residues 153-156; that stretch reads DTPG. Residues 153–157 and 207–210 each bind GTP; these read DTPGH and NKVD. Residues 207 to 210 are G4; that stretch reads NKVD. Positions 243-245 are G5; that stretch reads SAK.

The protein belongs to the TRAFAC class translation factor GTPase superfamily. Classic translation factor GTPase family. IF-2 subfamily.

The protein localises to the cytoplasm. In terms of biological role, one of the essential components for the initiation of protein synthesis. Protects formylmethionyl-tRNA from spontaneous hydrolysis and promotes its binding to the 30S ribosomal subunits. Also involved in the hydrolysis of GTP during the formation of the 70S ribosomal complex. In Deinococcus radiodurans (strain ATCC 13939 / DSM 20539 / JCM 16871 / CCUG 27074 / LMG 4051 / NBRC 15346 / NCIMB 9279 / VKM B-1422 / R1), this protein is Translation initiation factor IF-2.